A 676-amino-acid chain; its full sequence is Methionine--tRNA ligase (676 aa).

The short motif at 11–21 (PYANGPCHLGH) is the 'HIGH' region element. Residues Cys-143, Cys-146, Cys-156, and Cys-159 each coordinate Zn(2+). Positions 326-330 (KMSTS) match the 'KMSKS' region motif. ATP is bound at residue Thr-329. Residues 581–676 (EFGKVKLVVG…TEGNVGEYIK (96 aa)) enclose the tRNA-binding domain.

This sequence belongs to the class-I aminoacyl-tRNA synthetase family. MetG type 1 subfamily. As to quaternary structure, homodimer. The cofactor is Zn(2+).

The protein resides in the cytoplasm. The catalysed reaction is tRNA(Met) + L-methionine + ATP = L-methionyl-tRNA(Met) + AMP + diphosphate. Its function is as follows. Is required not only for elongation of protein synthesis but also for the initiation of all mRNA translation through initiator tRNA(fMet) aminoacylation. The sequence is that of Methionine--tRNA ligase from Methanosphaera stadtmanae (strain ATCC 43021 / DSM 3091 / JCM 11832 / MCB-3).